The primary structure comprises 301 residues: N-acetylmuramic acid 6-phosphate etherase (301 aa).

The SIS domain occupies 59 to 222; that stretch reads TSEALMHGGR…STSVMVKLGK (164 aa). Residue glutamate 87 is the Proton donor of the active site. Glutamate 118 is a catalytic residue.

The protein belongs to the GCKR-like family. MurNAc-6-P etherase subfamily. Homodimer.

It catalyses the reaction N-acetyl-D-muramate 6-phosphate + H2O = N-acetyl-D-glucosamine 6-phosphate + (R)-lactate. Its pathway is amino-sugar metabolism; N-acetylmuramate degradation. Functionally, specifically catalyzes the cleavage of the D-lactyl ether substituent of MurNAc 6-phosphate, producing GlcNAc 6-phosphate and D-lactate. This is N-acetylmuramic acid 6-phosphate etherase from Picosynechococcus sp. (strain ATCC 27264 / PCC 7002 / PR-6) (Agmenellum quadruplicatum).